Consider the following 780-residue polypeptide: Pentatricopeptide repeat-containing protein At1g79540 (780 aa).

PPR repeat units follow at residues 91 to 125 (SRESFGLVIDMLSEDNGCDLYWQTLEELKSGGVSV), 126 to 160 (DSYCFCVLISAYAKMGMAEKAVESFGRMKEFDCRP), 161 to 196 (DVFTYNVILRVMMREEVFFMLAFAVYNEMLKCNCSP), 197 to 231 (NLYTFGILMDGLYKKGRTSDAQKMFDDMTGRGISP), 232 to 266 (NRVTYTILISGLCQRGSADDARKLFYEMQTSGNYP), 267 to 301 (DSVAHNALLDGFCKLGRMVEAFELLRLFEKDGFVL), 302 to 336 (GLRGYSSLIDGLFRARRYTQAFELYANMLKKNIKP), 337 to 371 (DIILYTILIQGLSKAGKIEDALKLLSSMPSKGISP), 372 to 406 (DTYCYNAVIKALCGRGLLEEGRSLQLEMSETESFP), 407 to 441 (DACTHTILICSMCRNGLVREAEEIFTEIEKSGCSP), 442 to 476 (SVATFNALIDGLCKSGELKEARLLLHKMEVGRPAS), 481 to 515 (LSHSGNRSFDTMVESGSILKAYRDLAHFADTGSSP), 516 to 550 (DIVSYNVLINGFCRAGDIDGALKLLNVLQLKGLSP), 551 to 585 (DSVTYNTLINGLHRVGREEEAFKLFYAKDDFRHSP), 653 to 687 (TLGPYTIWLIGLCQSGRFHEALMVFSVLREKKILV), 688 to 722 (TPPSCVKLIHGLCKREQLDAAIEVFLYTLDNNFKL), and 723 to 758 (MPRVCNYLLSSLLESTEKMEIVSQLTNRMERAGYNV).

This sequence belongs to the PPR family. P subfamily.

The sequence is that of Pentatricopeptide repeat-containing protein At1g79540 from Arabidopsis thaliana (Mouse-ear cress).